Consider the following 417-residue polypeptide: Riboflavin biosynthesis protein RibBA (417 aa).

A DHBP synthase region spans residues Met1 to Lys204. D-ribulose 5-phosphate is bound by residues Arg28–Glu29, Asp33, Arg141–Thr145, and Glu165. Mg(2+) is bound at residue Glu29. Mg(2+) is bound at residue His144. Residues His205 to Leu417 form a GTP cyclohydrolase II region. Arg259 to Glu263 is a GTP binding site. Zn(2+) contacts are provided by Cys264, Cys275, and Cys277. GTP is bound by residues Gln280, Glu303–Arg305, and Thr325. Asp337 acts as the Proton acceptor; for GTP cyclohydrolase activity in catalysis. The active-site Nucleophile; for GTP cyclohydrolase activity is Arg339. Positions 360 and 365 each coordinate GTP.

In the N-terminal section; belongs to the DHBP synthase family. It in the C-terminal section; belongs to the GTP cyclohydrolase II family. It depends on Mg(2+) as a cofactor. Mn(2+) serves as cofactor. Zn(2+) is required as a cofactor.

The enzyme catalyses D-ribulose 5-phosphate = (2S)-2-hydroxy-3-oxobutyl phosphate + formate + H(+). It catalyses the reaction GTP + 4 H2O = 2,5-diamino-6-hydroxy-4-(5-phosphoribosylamino)-pyrimidine + formate + 2 phosphate + 3 H(+). It participates in cofactor biosynthesis; riboflavin biosynthesis; 2-hydroxy-3-oxobutyl phosphate from D-ribulose 5-phosphate: step 1/1. It functions in the pathway cofactor biosynthesis; riboflavin biosynthesis; 5-amino-6-(D-ribitylamino)uracil from GTP: step 1/4. Functionally, catalyzes the conversion of D-ribulose 5-phosphate to formate and 3,4-dihydroxy-2-butanone 4-phosphate. Catalyzes the conversion of GTP to 2,5-diamino-6-ribosylamino-4(3H)-pyrimidinone 5'-phosphate (DARP), formate and pyrophosphate. The chain is Riboflavin biosynthesis protein RibBA from Rhodococcus jostii (strain RHA1).